The primary structure comprises 904 residues: Phosphatidate phosphatase PAH1 (904 aa).

Residues 1-112 (MSLVGRVGSL…SGSENNNGNQ (112 aa)) are N-LIP. Disordered regions lie at residues 254 to 293 (EESSDTANIASDKVDAINDERNDLDSHSRDNAEKDSHDAE), 305 to 326 (ELTKTSENVKSEEPGPTFEDRN), 440 to 470 (GIIESEDQDSERVSIDSTREEVDKDNEDRKT), 574 to 595 (VEENESPKPKDDETTITPSSSG), and 612 to 655 (EHTG…QLVR). 3 stretches are compositionally biased toward basic and acidic residues: residues 265–293 (DKVDAINDERNDLDSHSRDNAEKDSHDAE), 311–326 (ENVKSEEPGPTFEDRN), and 449–470 (SERVSIDSTREEVDKDNEDRKT). Over residues 631–642 (GLQNSPETQSTT) the composition is skewed to polar residues. The segment at 703-857 (IVISDVDGTI…FIINPKGEVA (155 aa)) is C-LIP. The DXDXT motif signature appears at 707–711 (DVDGT).

The protein belongs to the lipin family. It depends on Mg(2+) as a cofactor. As to expression, expressed in roots, leaves, stems, flowers, siliques, embryos and mature seeds.

Its subcellular location is the cytoplasm. The protein resides in the cytosol. The enzyme catalyses a 1,2-diacyl-sn-glycero-3-phosphate + H2O = a 1,2-diacyl-sn-glycerol + phosphate. In terms of biological role, magnesium-dependent phosphatidate phosphatase which catalyzes the dephosphorylation of phosphatidate to yield diacylglycerol. Acts redundantly with PAH2 to repress phospholipid biosynthesis at the endoplasmic reticulum (ER). May function indirectly as repressor of multiple enzymes involved in phospholipid biosynthesis. Is involved in the pathway of galactolipid synthesis in the ER, which is required for the membrane lipid remodeling, an essential adaptation mechanism to cope with phosphate starvation. In Arabidopsis thaliana (Mouse-ear cress), this protein is Phosphatidate phosphatase PAH1 (PAH1).